The sequence spans 251 residues: Carbohydrate deacetylase (251 aa).

Mg(2+) contacts are provided by His-59 and His-122.

The protein belongs to the YdjC deacetylase family. As to quaternary structure, homodimer. Requires Mg(2+) as cofactor.

In terms of biological role, probably catalyzes the deacetylation of acetylated carbohydrates an important step in the degradation of oligosaccharides. The sequence is that of Carbohydrate deacetylase from Vibrio campbellii (strain ATCC BAA-1116).